Here is a 188-residue protein sequence, read N- to C-terminus: Elongation factor P (188 aa).

The protein belongs to the elongation factor P family.

The protein resides in the cytoplasm. Its pathway is protein biosynthesis; polypeptide chain elongation. Its function is as follows. Involved in peptide bond synthesis. Stimulates efficient translation and peptide-bond synthesis on native or reconstituted 70S ribosomes in vitro. Probably functions indirectly by altering the affinity of the ribosome for aminoacyl-tRNA, thus increasing their reactivity as acceptors for peptidyl transferase. This Aeromonas salmonicida (strain A449) protein is Elongation factor P.